A 471-amino-acid chain; its full sequence is Adenosylhomocysteinase (471 aa).

The substrate site is built by Thr-60, Asp-135, and Glu-196. 197-199 is a binding site for NAD(+); sequence TTT. Positions 226 and 230 each coordinate substrate. Residues Asn-231, 260-265, Glu-283, Asn-318, 339-341, and Asn-387 contribute to the NAD(+) site; these read GYGDVG and IGH.

This sequence belongs to the adenosylhomocysteinase family. Requires NAD(+) as cofactor.

It localises to the cytoplasm. It carries out the reaction S-adenosyl-L-homocysteine + H2O = L-homocysteine + adenosine. The protein operates within amino-acid biosynthesis; L-homocysteine biosynthesis; L-homocysteine from S-adenosyl-L-homocysteine: step 1/1. Functionally, may play a key role in the regulation of the intracellular concentration of adenosylhomocysteine. The polypeptide is Adenosylhomocysteinase (Pelodictyon phaeoclathratiforme (strain DSM 5477 / BU-1)).